Consider the following 338-residue polypeptide: MRILYWGTPAYAVPTLRQLHQAGHTIVGVVSQPDRRRGRGQQLVASAVKQEALNLNLPVFTPERIKKDSDCQAQLAALKADASVVVAFGQILPLEVLEQPPLGCWNGHGSLLPRWRGAAPIQWSILDGDAETGVGVMAMEEGLDTGPVLLERRLSIGLQDNAHALAEKLSGLTAELMVEAMPLIEAVGAGPTDERLHRLGVQHQAEASCYARMLCKQDYQIDWSNSALAIHRQVMGLYPGAQTSWNGKRLKLTQTEPLIDRLKDQLSPEAQELVGQWPTGGHAGGTVLACIQDLGLVVSSSGCPLLIREAQLEGKSRSRGQALVQQMAAAEQQSIGDN.

Residue 110-113 participates in (6S)-5,6,7,8-tetrahydrofolate binding; that stretch reads SLLP.

This sequence belongs to the Fmt family.

It catalyses the reaction L-methionyl-tRNA(fMet) + (6R)-10-formyltetrahydrofolate = N-formyl-L-methionyl-tRNA(fMet) + (6S)-5,6,7,8-tetrahydrofolate + H(+). Attaches a formyl group to the free amino group of methionyl-tRNA(fMet). The formyl group appears to play a dual role in the initiator identity of N-formylmethionyl-tRNA by promoting its recognition by IF2 and preventing the misappropriation of this tRNA by the elongation apparatus. The polypeptide is Methionyl-tRNA formyltransferase (Parasynechococcus marenigrum (strain WH8102)).